The sequence spans 634 residues: GTP-binding protein 4 (634 aa).

Ala-2 is subject to N-acetylalanine. Position 103 is an N6-acetyllysine; alternate (Lys-103). Lys-103 participates in a covalent cross-link: Glycyl lysine isopeptide (Lys-Gly) (interchain with G-Cter in SUMO2); alternate. Ser-122 carries the phosphoserine modification. An OBG-type G domain is found at 169-340 (RTLLLCGYPN…VKTEACDRLL (172 aa)). Residues 175 to 182 (GYPNVGKS), 221 to 225 (DTPGI), and 289 to 292 (NKCD) contribute to the GTP site. A Glycyl lysine isopeptide (Lys-Gly) (interchain with G-Cter in SUMO2) cross-link involves residue Lys-332. Phosphoserine is present on residues Ser-468, Ser-470, and Ser-472. The disordered stretch occupies residues 494–634 (KILQSKEKNK…KRKAGKKDRR (141 aa)). Residue Lys-534 forms a Glycyl lysine isopeptide (Lys-Gly) (interchain with G-Cter in SUMO2) linkage. Residues 544 to 554 (RRSRSVTRKRK) show a composition bias toward basic residues. Ser-558 bears the Phosphoserine mark. Low complexity predominate over residues 560–572 (PPSSTARSRSCSR). The segment covering 573–585 (TPRDVSGLRDVKM) has biased composition (basic and acidic residues). The span at 586–604 (VKKAKTMMKKAQKKMNRLG) shows a compositional bias: basic residues. The span at 605-618 (KKGEADRHVFDMKP) shows a compositional bias: basic and acidic residues. The span at 619-634 (KHLLSGKRKAGKKDRR) shows a compositional bias: basic residues.

The protein belongs to the TRAFAC class OBG-HflX-like GTPase superfamily. OBG GTPase family. NOG subfamily. As to quaternary structure, associates with pre-60S ribosomal particles. Interacts with MINAS-60 (product of an alternative open reading frame of RBM10). In terms of tissue distribution, ubiquitous.

Its subcellular location is the nucleus. It is found in the nucleolus. In terms of biological role, involved in the biogenesis of the 60S ribosomal subunit. Acts as TP53 repressor, preventing TP53 stabilization and cell cycle arrest. This chain is GTP-binding protein 4 (Gtpbp4), found in Mus musculus (Mouse).